Consider the following 258-residue polypeptide: Regulatory protein RecX (258 aa).

It belongs to the RecX family.

Its subcellular location is the cytoplasm. Functionally, modulates RecA activity. This is Regulatory protein RecX from Streptococcus equi subsp. equi (strain 4047).